Consider the following 521-residue polypeptide: Maturase K (521 aa).

The protein belongs to the intron maturase 2 family. MatK subfamily.

It localises to the plastid. The protein localises to the chloroplast. Functionally, usually encoded in the trnK tRNA gene intron. Probably assists in splicing its own and other chloroplast group II introns. This Trillium catesbaei (Catesby's trillium) protein is Maturase K.